Consider the following 452-residue polypeptide: Pup--protein ligase (452 aa).

Mg(2+) is bound at residue Glu-9. Arg-53 is an ATP binding site. Tyr-55 is a Mg(2+) binding site. The Proton acceptor role is filled by Asp-57. Glu-63 contacts Mg(2+). Residues Thr-66 and Trp-419 each contribute to the ATP site.

The protein belongs to the Pup ligase/Pup deamidase family. Pup-conjugating enzyme subfamily.

It catalyses the reaction ATP + [prokaryotic ubiquitin-like protein]-L-glutamate + [protein]-L-lysine = ADP + phosphate + N(6)-([prokaryotic ubiquitin-like protein]-gamma-L-glutamyl)-[protein]-L-lysine.. It participates in protein degradation; proteasomal Pup-dependent pathway. The protein operates within protein modification; protein pupylation. In terms of biological role, catalyzes the covalent attachment of the prokaryotic ubiquitin-like protein modifier Pup to the proteasomal substrate proteins, thereby targeting them for proteasomal degradation. This tagging system is termed pupylation. The ligation reaction involves the side-chain carboxylate of the C-terminal glutamate of Pup and the side-chain amino group of a substrate lysine. The polypeptide is Pup--protein ligase (Mycolicibacterium vanbaalenii (strain DSM 7251 / JCM 13017 / BCRC 16820 / KCTC 9966 / NRRL B-24157 / PYR-1) (Mycobacterium vanbaalenii)).